Reading from the N-terminus, the 262-residue chain is Phosphatidylserine decarboxylase proenzyme (262 aa).

Catalysis depends on charge relay system; for autoendoproteolytic cleavage activity residues Asp86, His142, and Ser226. Ser226 acts as the Schiff-base intermediate with substrate; via pyruvic acid; for decarboxylase activity in catalysis. Position 226 is a pyruvic acid (Ser); by autocatalysis (Ser226).

The protein belongs to the phosphatidylserine decarboxylase family. PSD-B subfamily. Prokaryotic type I sub-subfamily. As to quaternary structure, heterodimer of a large membrane-associated beta subunit and a small pyruvoyl-containing alpha subunit. Pyruvate serves as cofactor. Post-translationally, is synthesized initially as an inactive proenzyme. Formation of the active enzyme involves a self-maturation process in which the active site pyruvoyl group is generated from an internal serine residue via an autocatalytic post-translational modification. Two non-identical subunits are generated from the proenzyme in this reaction, and the pyruvate is formed at the N-terminus of the alpha chain, which is derived from the carboxyl end of the proenzyme. The autoendoproteolytic cleavage occurs by a canonical serine protease mechanism, in which the side chain hydroxyl group of the serine supplies its oxygen atom to form the C-terminus of the beta chain, while the remainder of the serine residue undergoes an oxidative deamination to produce ammonia and the pyruvoyl prosthetic group on the alpha chain. During this reaction, the Ser that is part of the protease active site of the proenzyme becomes the pyruvoyl prosthetic group, which constitutes an essential element of the active site of the mature decarboxylase.

The protein resides in the cell membrane. The enzyme catalyses a 1,2-diacyl-sn-glycero-3-phospho-L-serine + H(+) = a 1,2-diacyl-sn-glycero-3-phosphoethanolamine + CO2. It functions in the pathway phospholipid metabolism; phosphatidylethanolamine biosynthesis; phosphatidylethanolamine from CDP-diacylglycerol: step 2/2. Its function is as follows. Catalyzes the formation of phosphatidylethanolamine (PtdEtn) from phosphatidylserine (PtdSer). The protein is Phosphatidylserine decarboxylase proenzyme of Bacillus cereus (strain ATCC 10987 / NRS 248).